The sequence spans 518 residues: Glutamate--cysteine ligase (518 aa).

It belongs to the glutamate--cysteine ligase type 1 family. Type 1 subfamily.

The enzyme catalyses L-cysteine + L-glutamate + ATP = gamma-L-glutamyl-L-cysteine + ADP + phosphate + H(+). The protein operates within sulfur metabolism; glutathione biosynthesis; glutathione from L-cysteine and L-glutamate: step 1/2. The sequence is that of Glutamate--cysteine ligase from Klebsiella pneumoniae subsp. pneumoniae (strain ATCC 700721 / MGH 78578).